We begin with the raw amino-acid sequence, 135 residues long: HVA22-like protein d (135 aa).

3 helical membrane-spanning segments follow: residues 11 to 31 (LHSG…SVIA), 42 to 62 (QWLA…ILQS), and 63 to 83 (LIEW…WLVL).

Belongs to the DP1 family. Predominantly expressed in flower buds.

Its subcellular location is the membrane. This is HVA22-like protein d (HVA22D) from Arabidopsis thaliana (Mouse-ear cress).